The following is a 779-amino-acid chain: Probable ATP-dependent RNA helicase DHX40 (779 aa).

A disordered region spans residues 1–53; sequence MSRFPAVAGRAPRRQEEGERPVELQEERPSAVRIADREEKGCTSQEGGTTPTF. Basic and acidic residues predominate over residues 13–41; the sequence is RRQEEGERPVELQEERPSAVRIADREEKG. Positions 42–53 are enriched in polar residues; that stretch reads CTSQEGGTTPTF. One can recognise a Helicase ATP-binding domain in the interval 63-231; sequence IQAVRDNSFL…FGNCPIFDIP (169 aa). 76-83 is an ATP binding site; sequence GNTGSGKT. Residues 173–176 carry the DEAH box motif; that stretch reads DEAH. A Helicase C-terminal domain is found at 263–442; it reads TMDIHLNEMA…SVVLTLKCLA (180 aa).

Belongs to the DEAD box helicase family. DEAH subfamily.

The catalysed reaction is ATP + H2O = ADP + phosphate + H(+). Probable ATP-dependent RNA helicase. The protein is Probable ATP-dependent RNA helicase DHX40 (Dhx40) of Rattus norvegicus (Rat).